The chain runs to 863 residues: Bifunctional uridylyltransferase/uridylyl-removing enzyme (863 aa).

Residues 1–328 (MLFSPTLSSP…PSNQDTVIDQ (328 aa)) form a uridylyltransferase region. The tract at residues 329–687 (LDDDFQLINQ…ISNRFSLGGT (359 aa)) is uridylyl-removing. The 123-residue stretch at 446-568 (VDEHTLRVML…VQNQVRLDYL (123 aa)) folds into the HD domain. ACT domains lie at 688–772 (EVFI…PNRQ) and 794–863 (QMEL…RNIG).

It belongs to the GlnD family. The cofactor is Mg(2+).

The catalysed reaction is [protein-PII]-L-tyrosine + UTP = [protein-PII]-uridylyl-L-tyrosine + diphosphate. It catalyses the reaction [protein-PII]-uridylyl-L-tyrosine + H2O = [protein-PII]-L-tyrosine + UMP + H(+). Its activity is regulated as follows. Uridylyltransferase (UTase) activity is inhibited by glutamine, while glutamine activates uridylyl-removing (UR) activity. Functionally, modifies, by uridylylation and deuridylylation, the PII regulatory proteins (GlnB and homologs), in response to the nitrogen status of the cell that GlnD senses through the glutamine level. Under low glutamine levels, catalyzes the conversion of the PII proteins and UTP to PII-UMP and PPi, while under higher glutamine levels, GlnD hydrolyzes PII-UMP to PII and UMP (deuridylylation). Thus, controls uridylylation state and activity of the PII proteins, and plays an important role in the regulation of nitrogen assimilation and metabolism. In Haemophilus influenzae (strain 86-028NP), this protein is Bifunctional uridylyltransferase/uridylyl-removing enzyme.